The primary structure comprises 407 residues: Na(+)-translocating NADH-quinone reductase subunit F (407 aa).

Residues 3-23 (IILGVVMFTLIVLALVLVILF) traverse the membrane as a helical segment. The 2Fe-2S ferredoxin-type domain occupies 32-126 (GDITISVNDD…DMDIELPEEI (95 aa)). 4 residues coordinate [2Fe-2S] cluster: cysteine 69, cysteine 75, cysteine 78, and cysteine 110. In terms of domain architecture, FAD-binding FR-type spans 129 to 269 (VKKWECTVIS…SGPFGEFFAK (141 aa)). A catalytic region spans residues 272-389 (DAEMVFVGGG…PMMNAAVIGM (118 aa)).

Belongs to the NqrF family. Composed of six subunits; NqrA, NqrB, NqrC, NqrD, NqrE and NqrF. [2Fe-2S] cluster serves as cofactor. FAD is required as a cofactor.

The protein localises to the cell inner membrane. The enzyme catalyses a ubiquinone + n Na(+)(in) + NADH + H(+) = a ubiquinol + n Na(+)(out) + NAD(+). In terms of biological role, NQR complex catalyzes the reduction of ubiquinone-1 to ubiquinol by two successive reactions, coupled with the transport of Na(+) ions from the cytoplasm to the periplasm. The first step is catalyzed by NqrF, which accepts electrons from NADH and reduces ubiquinone-1 to ubisemiquinone by a one-electron transfer pathway. This is Na(+)-translocating NADH-quinone reductase subunit F from Vibrio campbellii (strain ATCC BAA-1116).